A 193-amino-acid chain; its full sequence is Ganglioside GM2 activator (193 aa).

An N-terminal signal peptide occupies residues 1–20 (MHRLPLLLLLGLLLAGSVAP). Cystine bridges form between Cys-39-Cys-183, Cys-99-Cys-106, Cys-112-Cys-138, and Cys-125-Cys-136. Asn-151 is a glycosylation site (N-linked (GlcNAc...) asparagine).

In terms of tissue distribution, widely expressed. Most abundant in kidney and testis.

The protein localises to the lysosome. It carries out the reaction cholesterol(in) = cholesterol(out). Functionally, binds gangliosides and stimulates ganglioside GM2 degradation. It stimulates only the breakdown of ganglioside GM2 and glycolipid GA2 by beta-hexosaminidase A. It extracts single GM2 molecules from membranes and presents them in soluble form to beta-hexosaminidase A for cleavage of N-acetyl-D-galactosamine and conversion to GM3. The large binding pocket can accommodate several single chain phospholipids and fatty acids, GM2A also exhibits some calcium-independent phospholipase activity. Has cholesterol transfer activity. This chain is Ganglioside GM2 activator, found in Mus musculus (Mouse).